A 315-amino-acid polypeptide reads, in one-letter code: MSLLSDLINLNLSDTTEKIIAEYIWVGGSGVDLRSKARTLSGPVNDPSKLPKWNYDGSSTGQAPGKDSEVILWPQAIFKDPFRRGNNILVICDTYTPSGKPIPTNKRHAAAKIFSHPDVAAEEPWFGIEQEYTLLQKDIHWPIGMALGGFPGPQGPYYCGTGAEKAFGRDIVDSHYKACLYAGINISGINAEVMPGQWEFQVGPSIGISAGDELWVARYILERITEIAGVVLSLDPKPIPGDWNGAGAHTNYSTKSMRNDGGYEVIKQAIEKLEKRHNEHIAAYGEGNERRLTGRHETADISTFSWGVANRGASI.

In terms of domain architecture, GS beta-grasp spans 19 to 99 (IIAEYIWVGG…VICDTYTPSG (81 aa)). The region spanning 106–315 (KRHAAAKIFS…WGVANRGASI (210 aa)) is the GS catalytic domain.

The protein belongs to the glutamine synthetase family. As to quaternary structure, homooctamer.

Its subcellular location is the cytoplasm. It carries out the reaction L-glutamate + NH4(+) + ATP = L-glutamine + ADP + phosphate + H(+). This is Glutamine synthetase nodule isozyme from Lupinus angustifolius (Narrow-leaved blue lupine).